The sequence spans 196 residues: Large ribosomal subunit protein bL9 (196 aa).

It belongs to the bacterial ribosomal protein bL9 family.

In terms of biological role, binds to the 23S rRNA. In Bradyrhizobium sp. (strain ORS 278), this protein is Large ribosomal subunit protein bL9.